A 327-amino-acid chain; its full sequence is Clavesin-2 (327 aa).

In terms of domain architecture, CRAL-TRIO spans Ile96–Asp257. The interval Glu287–Asp327 is disordered. The residue at position 325 (Ser325) is a Phosphoserine.

Forms a complex with clathrin heavy chain and gamma-adaptin.

It localises to the golgi apparatus. The protein localises to the trans-Golgi network membrane. Its subcellular location is the cytoplasmic vesicle. The protein resides in the clathrin-coated vesicle. It is found in the early endosome membrane. In terms of biological role, required for normal morphology of late endosomes and/or lysosomes in neurons. Binds phosphatidylinositol 3,5-bisphosphate (PtdIns(3,5)P2). This Homo sapiens (Human) protein is Clavesin-2 (CLVS2).